We begin with the raw amino-acid sequence, 316 residues long: Acetaldehyde dehydrogenase 3 (316 aa).

12 to 15 (SGNI) lines the NAD(+) pocket. The active-site Acyl-thioester intermediate is Cys-132. NAD(+)-binding positions include 163 to 171 (SAGPGTRAN) and Asn-289.

Belongs to the acetaldehyde dehydrogenase family.

The enzyme catalyses acetaldehyde + NAD(+) + CoA = acetyl-CoA + NADH + H(+). In Comamonas testosteroni (Pseudomonas testosteroni), this protein is Acetaldehyde dehydrogenase 3 (mhpF).